We begin with the raw amino-acid sequence, 245 residues long: Major prion protein (245 aa).

An N-terminal signal peptide occupies residues 1–22 (MANLGCWMLVVFVATWSDLGLC). An interaction with GRB2, ERI3 and SYN1 region spans residues 23–222 (KKRPKPGGWN…ESQAYYQRGS (200 aa)). The interval 25 to 102 (RPKPGGWNTG…KPSKPKTSMK (78 aa)) is disordered. Repeat copies occupy residues 51-59 (PQGGGGWGQ), 60-67 (PHGGGWGQ), 68-75 (PHGGGWGQ), and 76-83 (PHGGGWGQ). The segment at 51 to 83 (PQGGGGWGQPHGGGWGQPHGGGWGQPHGGGWGQ) is 4 X 8 AA tandem repeats of P-H-G-G-G-W-G-Q. The segment covering 52–87 (QGGGGWGQPHGGGWGQPHGGGWGQPHGGGWGQGGGT) has biased composition (gly residues). Cu(2+) contacts are provided by G54, G55, H61, G62, G63, H69, G70, G71, H77, G78, and G79. Over residues 90 to 101 (QWHKPSKPKTSM) the composition is skewed to basic residues. A disulfide bond links C171 and C206. N-linked (GlcNAc...) asparagine glycosylation is found at N173 and N189. The GPI-anchor amidated serine moiety is linked to residue S222. Residues 223-245 (SMVLFSSPPVILLISFLIFLIVG) constitute a propeptide, removed in mature form.

The protein belongs to the prion family. Monomer and homodimer. Has a tendency to aggregate into amyloid fibrils containing a cross-beta spine, formed by a steric zipper of superposed beta-strands. Soluble oligomers may represent an intermediate stage on the path to fibril formation. Copper binding may promote oligomerization. Interacts with GRB2, APP, ERI3/PRNPIP and SYN1. Mislocalized cytosolically exposed PrP interacts with MGRN1; this interaction alters MGRN1 subcellular location and causes lysosomal enlargement. Interacts with KIAA1191.

It is found in the cell membrane. The protein resides in the golgi apparatus. Its primary physiological function is unclear. Has cytoprotective activity against internal or environmental stresses. May play a role in neuronal development and synaptic plasticity. May be required for neuronal myelin sheath maintenance. May play a role in iron uptake and iron homeostasis. Soluble oligomers are toxic to cultured neuroblastoma cells and induce apoptosis (in vitro). Association with GPC1 (via its heparan sulfate chains) targets PRNP to lipid rafts. Also provides Cu(2+) or Zn(2+) for the ascorbate-mediated GPC1 deaminase degradation of its heparan sulfate side chains. The chain is Major prion protein (PRNP) from Cercopithecus diana (Diana monkey).